A 156-amino-acid chain; its full sequence is Small ribosomal subunit protein uS7 (156 aa).

The protein belongs to the universal ribosomal protein uS7 family. Part of the 30S ribosomal subunit. Contacts proteins S9 and S11.

In terms of biological role, one of the primary rRNA binding proteins, it binds directly to 16S rRNA where it nucleates assembly of the head domain of the 30S subunit. Is located at the subunit interface close to the decoding center, probably blocks exit of the E-site tRNA. The sequence is that of Small ribosomal subunit protein uS7 from Solidesulfovibrio magneticus (strain ATCC 700980 / DSM 13731 / RS-1) (Desulfovibrio magneticus).